Reading from the N-terminus, the 256-residue chain is Type III pantothenate kinase (256 aa).

D6–Y13 is an ATP binding site. Substrate-binding positions include Y99 and G106 to R109. D108 serves as the catalytic Proton acceptor. A K(+)-binding site is contributed by D129. T132 serves as a coordination point for ATP. T184 is a binding site for substrate.

It belongs to the type III pantothenate kinase family. As to quaternary structure, homodimer. NH4(+) serves as cofactor. K(+) is required as a cofactor.

It is found in the cytoplasm. The catalysed reaction is (R)-pantothenate + ATP = (R)-4'-phosphopantothenate + ADP + H(+). Its pathway is cofactor biosynthesis; coenzyme A biosynthesis; CoA from (R)-pantothenate: step 1/5. Its function is as follows. Catalyzes the phosphorylation of pantothenate (Pan), the first step in CoA biosynthesis. The protein is Type III pantothenate kinase of Legionella pneumophila (strain Paris).